Reading from the N-terminus, the 421-residue chain is Synaptotagmin-12 (421 aa).

The Vesicular portion of the chain corresponds to 1-18 (MAVDVTEYHLSVIKSPPG). Residues 19–39 (WEVGVYAAGALALLGIAAVSL) traverse the membrane as a helical segment. Residues 40–421 (WKLWTSGSFP…VSMWHPVRRN (382 aa)) lie on the Cytoplasmic side of the membrane. Phosphoserine; by PKA is present on serine 97. Residues serine 99 and serine 214 each carry the phosphoserine modification. C2 domains lie at 152-272 (TLGQ…SGWL) and 283-416 (AVGE…SMWH).

This sequence belongs to the synaptotagmin family. As to quaternary structure, homodimer. Can also form heterodimers. Interacts with SYT1. Phosphorylation of Ser-97 is required for mossy-fiber long-term potentiation. Expressed in the brain, specifically in neurons of the cerebellum, cortex, hippocampus, olfactory bulb, brainstem and spinal cord (at protein level).

The protein resides in the cytoplasmic vesicle. Its subcellular location is the secretory vesicle. The protein localises to the synaptic vesicle membrane. In terms of biological role, synaptic vesicle phosphoprotein that enhances spontaneous neurotransmitter release but does not effect induced neurotransmitter release. Unlike other synaptotagmins, it does not bind Ca(2+) or phospholipids. Essential for mossy-fiber long-term potentiation in the hippocampus. This is Synaptotagmin-12 from Rattus norvegicus (Rat).